The primary structure comprises 707 residues: Ribosomal RNA large subunit methyltransferase K/L (707 aa).

The 112-residue stretch at 44–155 folds into the THUMP domain; it reads VIYNLCLWSR…NDILTVSFDL (112 aa).

It belongs to the methyltransferase superfamily. RlmKL family.

It localises to the cytoplasm. The enzyme catalyses guanosine(2445) in 23S rRNA + S-adenosyl-L-methionine = N(2)-methylguanosine(2445) in 23S rRNA + S-adenosyl-L-homocysteine + H(+). It carries out the reaction guanosine(2069) in 23S rRNA + S-adenosyl-L-methionine = N(2)-methylguanosine(2069) in 23S rRNA + S-adenosyl-L-homocysteine + H(+). In terms of biological role, specifically methylates the guanine in position 2445 (m2G2445) and the guanine in position 2069 (m7G2069) of 23S rRNA. The polypeptide is Ribosomal RNA large subunit methyltransferase K/L (Legionella pneumophila (strain Corby)).